The sequence spans 365 residues: tRNA N6-adenosine threonylcarbamoyltransferase (365 aa).

H119 and H123 together coordinate Fe cation. Residues 141–145 (LVSGG), D174, G187, and N288 each bind substrate. D316 is a Fe cation binding site.

The protein belongs to the KAE1 / TsaD family. Requires Fe(2+) as cofactor.

The protein localises to the cytoplasm. It catalyses the reaction L-threonylcarbamoyladenylate + adenosine(37) in tRNA = N(6)-L-threonylcarbamoyladenosine(37) in tRNA + AMP + H(+). Functionally, required for the formation of a threonylcarbamoyl group on adenosine at position 37 (t(6)A37) in tRNAs that read codons beginning with adenine. Is involved in the transfer of the threonylcarbamoyl moiety of threonylcarbamoyl-AMP (TC-AMP) to the N6 group of A37, together with TsaE and TsaB. TsaD likely plays a direct catalytic role in this reaction. The protein is tRNA N6-adenosine threonylcarbamoyltransferase of Agrobacterium fabrum (strain C58 / ATCC 33970) (Agrobacterium tumefaciens (strain C58)).